Consider the following 479-residue polypeptide: Aldehyde dehydrogenase family 3 member B3 (479 aa).

Catalysis depends on residues Glu-223 and Cys-257. Cys-476 carries S-geranylgeranyl cysteine lipidation. The propeptide at 477 to 479 (TLL) is removed in mature form.

This sequence belongs to the aldehyde dehydrogenase family. In terms of processing, geranylgeranylation is important for membrane localization and enzyme activity. As to expression, expressed in testis, kidney, small intestine, spleen, white adipose tissue, liver and lung.

The protein localises to the cell membrane. The enzyme catalyses an aldehyde + NAD(+) + H2O = a carboxylate + NADH + 2 H(+). It catalyses the reaction hexadecanoate + NADH + 2 H(+) = hexadecanal + NAD(+) + H2O. The catalysed reaction is octanal + NAD(+) + H2O = octanoate + NADH + 2 H(+). Its function is as follows. Oxidizes medium and long chain aldehydes into non-toxic fatty acids. This Mus musculus (Mouse) protein is Aldehyde dehydrogenase family 3 member B3.